The sequence spans 1891 residues: Transcription initiation factor TFIID subunit 1 (1891 aa).

Disordered stretches follow at residues 1–34, 154–180, and 197–224; these read MGPG…AGGG, KLMP…GVSE, and ASEK…SESK. The 435-residue stretch at 1-435 folds into the Protein kinase 1 domain; it reads MGPGWAGLLQ…VTQLHWEDDI (435 aa). The span at 156 to 165 shows a compositional bias: pro residues; sequence MPPPPPPPGP. Low complexity predominate over residues 197 to 208; the sequence is ASEKVDFSSSSD. Serine 328 is modified (phosphoserine; by autocatalysis). The tract at residues 535-556 is disordered; that stretch reads PDEKEEATSNSPSKENKKESSL. The segment at 538-997 is histone acetyltransferase (HAT); sequence KEEATSNSPS…KIPNKPTQQK (460 aa). Lysine 565 bears the N6-acetyllysine mark. Glycyl lysine isopeptide (Lys-Gly) (interchain with G-Cter in SUMO2) cross-links involve residues lysine 570 and lysine 583. Disordered regions lie at residues 990 to 1009, 1128 to 1148, and 1254 to 1278; these read PNKP…KKTV, MLQN…QERK, and RLKR…MKER. Basic and acidic residues-rich tracts occupy residues 995–1004, 1139–1148, and 1254–1270; these read QQKDDKEPQP, SREREEQERK, and RLKR…PPEK. Positions 1216-1294 form a DNA-binding region, HMG box; sequence VRIRTTKDEE…CGACGAIGHM (79 aa). The interaction with ASF1A and ASF1B stretch occupies residues 1363 to 1650; the sequence is VLKFPKQQLP…TAKEAALEEA (288 aa). The Nuclear localization signal signature appears at 1372 to 1379; that stretch reads PPKKKRRV. Bromo domains lie at 1397 to 1505 and 1519 to 1628; these read RRRT…LKEK and LLDD…LTEY. Residues 1446–1891 form the Protein kinase 2 domain; the sequence is MDLQTLRENV…AGDTDLDSDE (446 aa). Disordered stretches follow at residues 1651–1676 and 1690–1891; these read ELES…NNTS and SNLS…DSDE. Over residues 1659–1668 the composition is skewed to pro residues; the sequence is TPGPYTPQPP. Phosphoserine is present on residues serine 1690 and serine 1693. The segment covering 1690–1708 has biased composition (polar residues); that stretch reads SNLSVLDIPSATSEKQLTQ. Composition is skewed to acidic residues over residues 1711-1723 and 1741-1756; these read GDGD…EEEG and EGED…EEGD. Positions 1764–1778 are enriched in low complexity; it reads LSESGSDSDVESGSL. Phosphoserine is present on residues serine 1799, serine 1802, and serine 1820. Positions 1830-1840 are enriched in polar residues; sequence KSNTQDTSFSS. The segment covering 1846 to 1855 has biased composition (acidic residues); the sequence is VSEEEEDEEE. The residue at position 1847 (serine 1847) is a Phosphoserine. Over residues 1858–1867 the composition is skewed to polar residues; sequence SGPSVLSQVH.

This sequence belongs to the TAF1 family. As to quaternary structure, component of the TFIID basal transcription factor complex, composed of TATA-box-binding protein TBP, and a number of TBP-associated factors (TAFs). TFIID consists of at least TBP, TAF1, TAF2, TAF3, TAF4, TAF5, TAF6, TAF7, TAF8, TAF9, TAF10, TAF11, TAF12 and TAF13. Interacts with TAF7; the interaction is direct. TAF1, when part of the TFIID complex, interacts with C-terminus of TP53. Part of a TFIID-containing RNA polymerase II pre-initiation complex that is composed of TBP and at least GTF2A1, GTF2A2, GTF2E1, GTF2E2, GTF2F1, GTF2H2, GTF2H3, GTF2H4, GTF2H5, GTF2B, TCEA1, ERCC2, ERCC3, TAF1, TAF2, TAF3, TAF4, TAF5, TAF6, TAF7, TAF8, TAF9, TAF10, TAF11, TAF12 and TAF13. Component of some MLL1/MLL complex, at least composed of the core components KMT2A/MLL1, ASH2L, HCFC1/HCF1, WDR5 and RBBP5, as well as the facultative components BACC1, CHD8, E2F6, HSP70, INO80C, KANSL1, LAS1L, MAX, MCRS1, MGA, KAT8/MOF, PELP1, PHF20, PRP31, RING2, RUVB1/TIP49A, RUVB2/TIP49B, SENP3, TAF1, TAF4, TAF6, TAF7, TAF9 and TEX10. RB1 interacts with the N-terminal domain of TAF1. Interacts with ASF1A and ASF1B. Interacts (via bromo domains) with acetylated lysine residues on the N-terminus of histone H1.4, H2A, H2B, H3 and H4 (in vitro). It depends on Mg(2+) as a cofactor. Phosphorylated by casein kinase II in vitro.

Its subcellular location is the nucleus. It carries out the reaction L-seryl-[protein] + ATP = O-phospho-L-seryl-[protein] + ADP + H(+). The enzyme catalyses L-threonyl-[protein] + ATP = O-phospho-L-threonyl-[protein] + ADP + H(+). The catalysed reaction is L-lysyl-[protein] + acetyl-CoA = N(6)-acetyl-L-lysyl-[protein] + CoA + H(+). Its activity is regulated as follows. Autophosphorylates on Ser residues. Inhibited by retinoblastoma tumor suppressor protein, RB1. Binding to TAF1 or CIITA inhibits the histone acetyltransferase activity. In terms of biological role, the TFIID basal transcription factor complex plays a major role in the initiation of RNA polymerase II (Pol II)-dependent transcription. TFIID recognizes and binds promoters with or without a TATA box via its subunit TBP, a TATA-box-binding protein, and promotes assembly of the pre-initiation complex (PIC). The TFIID complex consists of TBP and TBP-associated factors (TAFs), including TAF1, TAF2, TAF3, TAF4, TAF5, TAF6, TAF7, TAF8, TAF9, TAF10, TAF11, TAF12 and TAF13. TAF1 is the largest component and core scaffold of the TFIID complex, involved in nucleating complex assembly. TAF1 forms a promoter DNA binding subcomplex of TFIID, together with TAF7 and TAF2. Contains novel N- and C-terminal Ser/Thr kinase domains which can autophosphorylate or transphosphorylate other transcription factors. Phosphorylates TP53 on 'Thr-55' which leads to MDM2-mediated degradation of TP53. Phosphorylates GTF2A1 and GTF2F1 on Ser residues. Possesses DNA-binding activity. Exhibits histone acetyltransferase activity towards histones H3 and H4. Essential for progression of the G1 phase of the cell cycle. In Mus musculus (Mouse), this protein is Transcription initiation factor TFIID subunit 1.